We begin with the raw amino-acid sequence, 592 residues long: Endoribonuclease Arlr (592 aa).

An N-terminal signal peptide occupies residues 1 to 24 (MRCLALSAVFLCLTLAGHFHLSDA). Residues 83–329 (PTAANKPPPL…FQSSGNSVAT (247 aa)) form a disordered region. Polar residues predominate over residues 109 to 120 (PGSSPFGASQNP). 2 stretches are compositionally biased toward low complexity: residues 134-144 (PSHPSQPSQPS) and 188-209 (GISSTTSTTTTAKPITSTTGKT). Composition is skewed to pro residues over residues 234–249 (LPAPKTPPGSPTPTPG) and 258–267 (LPTPQHPVHP). Residues 268-294 (PTKATSAATPTPTPTPSFSSSVTPTPA) are compositionally biased toward low complexity. Positions 329–592 (TDDEIRQLTE…NLIGSAYPEI (264 aa)) constitute an EndoU domain. Residues histidine 473, histidine 488, and lysine 531 contribute to the active site.

It belongs to the ENDOU family. As to quaternary structure, monomer. It depends on Mn(2+) as a cofactor. As to expression, predominantly expressed in head. Expressed in fat body cells.

It localises to the endoplasmic reticulum lumen. It is found in the secreted. The enzyme catalyses a ribonucleotidyl-ribonucleotide-RNA + H2O = a 3'-end 3'-phospho-ribonucleotide-RNA + a 5'-end dephospho-ribonucleoside-RNA + H(+). Endoribonuclease that cleaves single-stranded RNAs; unlike its paralog EndoU it does not appear to preferentially cleave at uridylates and releases linear products instead of products that have 2'-3'-cyclic phosphate termini. Preferentially cleaves single stranded RNA at sites with AU, UC and poly-U sites cleaved less efficiently. Targets mRNAs encoding proteins involved in lipid metabolism, particularly those involved in lipolysis, to regulate their expression. The sequence is that of Endoribonuclease Arlr from Drosophila melanogaster (Fruit fly).